A 150-amino-acid chain; its full sequence is Large ribosomal subunit protein bL9 (150 aa).

The protein belongs to the bacterial ribosomal protein bL9 family.

In terms of biological role, binds to the 23S rRNA. This is Large ribosomal subunit protein bL9 from Corynebacterium efficiens (strain DSM 44549 / YS-314 / AJ 12310 / JCM 11189 / NBRC 100395).